The following is a 368-amino-acid chain: Phosphate acyltransferase (368 aa).

Positions 334-368 (AAPLGESGRDANGAGQASPSAGQPAEPSAALSSKT) are disordered.

The protein belongs to the PlsX family. Homodimer. Probably interacts with PlsY.

Its subcellular location is the cytoplasm. The catalysed reaction is a fatty acyl-[ACP] + phosphate = an acyl phosphate + holo-[ACP]. Its pathway is lipid metabolism; phospholipid metabolism. In terms of biological role, catalyzes the reversible formation of acyl-phosphate (acyl-PO(4)) from acyl-[acyl-carrier-protein] (acyl-ACP). This enzyme utilizes acyl-ACP as fatty acyl donor, but not acyl-CoA. The chain is Phosphate acyltransferase from Burkholderia pseudomallei (strain 1106a).